Consider the following 583-residue polypeptide: Protein NRT1/ PTR FAMILY 5.1 (583 aa).

Residues 74–94 traverse the membrane as a helical segment; that stretch reads WSGAVWITPIAGAYIADSYIG. Residue T98 is modified to Phosphothreonine. 10 consecutive transmembrane segments (helical) span residues 99–119, 134–154, 182–202, 210–230, 320–340, 361–381, 405–425, 446–466, 485–505, and 529–549; these read FTASSLIYVLGMILLTMAVTV, ASSLQVTFFYISLYTIAIGAG, FFNWWMFSSFLGALFATLGLV, WGLGYGIPTVGLLVSLVVFYI, VLGLIFIWLVTLIPSTLWAQV, IPAASLGSFVTLSMLLSVPMY, LGVGFAIQIVAIAIASAVEVK, IFWLLPQYSLLGIGDVFNAIG, TFFTSGIGLGNFLNSFLVTMI, and YYYGFLVVISIVNMGLFVWAA.

The protein belongs to the major facilitator superfamily. Proton-dependent oligopeptide transporter (POT/PTR) (TC 2.A.17) family. As to expression, expressed in flowers. Detected in stems, leaves and siliques.

Its subcellular location is the membrane. The protein is Protein NRT1/ PTR FAMILY 5.1 (NPF5.1) of Arabidopsis thaliana (Mouse-ear cress).